A 560-amino-acid chain; its full sequence is Arginine--tRNA ligase (560 aa).

The 'HIGH' region motif lies at 135–145 (ANPTGLLHMGN).

It belongs to the class-I aminoacyl-tRNA synthetase family. In terms of assembly, monomer.

Its subcellular location is the cytoplasm. It catalyses the reaction tRNA(Arg) + L-arginine + ATP = L-arginyl-tRNA(Arg) + AMP + diphosphate. The chain is Arginine--tRNA ligase from Moorella thermoacetica (strain ATCC 39073 / JCM 9320).